The primary structure comprises 319 residues: Ribonuclease Z (319 aa).

Zn(2+) is bound by residues H62, H64, D66, H67, H145, D215, and H273. The Proton acceptor role is filled by D66.

It belongs to the RNase Z family. Homodimer. The cofactor is Zn(2+).

The catalysed reaction is Endonucleolytic cleavage of RNA, removing extra 3' nucleotides from tRNA precursor, generating 3' termini of tRNAs. A 3'-hydroxy group is left at the tRNA terminus and a 5'-phosphoryl group is left at the trailer molecule.. Functionally, zinc phosphodiesterase, which displays some tRNA 3'-processing endonuclease activity. Probably involved in tRNA maturation, by removing a 3'-trailer from precursor tRNA. This is Ribonuclease Z from Borreliella burgdorferi (strain ATCC 35210 / DSM 4680 / CIP 102532 / B31) (Borrelia burgdorferi).